A 950-amino-acid polypeptide reads, in one-letter code: Protein translocase subunit SecA (950 aa).

Residues Gln87, 105–109 (GEGKT), and Asp524 contribute to the ATP site. A disordered region spans residues 908–932 (GAAPVPAEARNPNDPSTWGKVGRNE). Zn(2+) is bound by residues Cys934, Cys936, Cys945, and His946.

This sequence belongs to the SecA family. Monomer and homodimer. Part of the essential Sec protein translocation apparatus which comprises SecA, SecYEG and auxiliary proteins SecDF-YajC and YidC. Zn(2+) is required as a cofactor.

The protein resides in the cell inner membrane. It is found in the cytoplasm. The enzyme catalyses ATP + H2O + cellular proteinSide 1 = ADP + phosphate + cellular proteinSide 2.. In terms of biological role, part of the Sec protein translocase complex. Interacts with the SecYEG preprotein conducting channel. Has a central role in coupling the hydrolysis of ATP to the transfer of proteins into and across the cell membrane, serving both as a receptor for the preprotein-SecB complex and as an ATP-driven molecular motor driving the stepwise translocation of polypeptide chains across the membrane. The chain is Protein translocase subunit SecA from Bradyrhizobium sp. (strain BTAi1 / ATCC BAA-1182).